A 1211-amino-acid chain; its full sequence is Homeodomain-interacting protein kinase 1 (1211 aa).

K25 participates in a covalent cross-link: Glycyl lysine isopeptide (Lys-Gly) (interchain with G-Cter in SUMO); alternate. A Glycyl lysine isopeptide (Lys-Gly) (interchain with G-Cter in SUMO2); alternate cross-link involves residue K25. Glycyl lysine isopeptide (Lys-Gly) (interchain with G-Cter in SUMO2) cross-links involve residues K120 and K124. Residues 190-518 (YEVLEFLGRG…PLKTLNHQFV (329 aa)) form the Protein kinase domain. ATP-binding positions include 196–204 (LGRGTFGQV) and K219. Catalysis depends on D315, which acts as the Proton acceptor. Residues 835-856 (QQQSSSLPSRKNKQSAPVSSTS) are disordered. A Nuclear localization signal 1 (NLS1) motif is present at residues 844 to 847 (RKNK). The residue at position 872 (S872) is a Phosphoserine. The interaction with TP53 stretch occupies residues 885 to 1094 (PVQDQHQPII…FQHGSPLHST (210 aa)). Residues 891–998 (QPIIIPDTPS…PLKTQLGDCT (108 aa)) form a required for localization to nuclear speckles region. The segment at 902-926 (PVSVITIRSDTDEEEDNKFKPSSSS) is SUMO interaction motifs (SIM); required for nuclear localization and kinase activity. Residue K991 forms a Glycyl lysine isopeptide (Lys-Gly) (interchain with G-Cter in SUMO2) linkage. Disordered regions lie at residues 1002–1023 (QASG…GQSS), 1047–1070 (LSQN…APRR), and 1085–1105 (FQHG…APAH). Low complexity-rich tracts occupy residues 1048–1064 (SQNQ…ERSS) and 1096–1105 (HPHLAPAPAH). The residue at position 1201 (S1201) is a Phosphoserine. K1204 participates in a covalent cross-link: Glycyl lysine isopeptide (Lys-Gly) (interchain with G-Cter in SUMO).

This sequence belongs to the protein kinase superfamily. CMGC Ser/Thr protein kinase family. HIPK subfamily. In terms of assembly, interacts with Nkx1-2, Nkx2-5, MYB, PARK7, DAXX and p53/TP53. Part of a cytoplasmic complex made of HIPK1, DAB2IP and MAP3K5 in response to TNF. This complex formation promotes MAP3K5-JNK activation and subsequent apoptosis. Post-translationally, phosphorylated and activated by JNK1. Autophosphorylated. Sumoylated. When conjugated it is directed to nuclear speckles. SENP1-mediated desumoylation is mediated by TNF in response to stress stimuli, triggering transient translocation from nucleus to cytoplasm.

The protein resides in the nucleus. Its subcellular location is the cytoplasm. It is found in the nucleus speckle. The enzyme catalyses L-seryl-[protein] + ATP = O-phospho-L-seryl-[protein] + ADP + H(+). It carries out the reaction L-threonyl-[protein] + ATP = O-phospho-L-threonyl-[protein] + ADP + H(+). Functionally, serine/threonine-protein kinase involved in transcription regulation and TNF-mediated cellular apoptosis. Plays a role as a corepressor for homeodomain transcription factors. Phosphorylates DAXX and MYB. Phosphorylates DAXX in response to stress, and mediates its translocation from the nucleus to the cytoplasm. Inactivates MYB transcription factor activity by phosphorylation. Prevents MAP3K5-JNK activation in the absence of TNF. TNF triggers its translocation to the cytoplasm in response to stress stimuli, thus activating nuclear MAP3K5-JNK by derepression and promoting apoptosis. May be involved in anti-oxidative stress responses. Involved in the regulation of eye size, lens formation and retinal lamination during late embryogenesis. Promotes angiogenesis and to be involved in erythroid differentiation. May be involved in malignant squamous cell tumor formation. Phosphorylates PAGE4 at 'Thr-51' which is critical for the ability of PAGE4 to potentiate the transcriptional activator activity of JUN. The sequence is that of Homeodomain-interacting protein kinase 1 from Rattus norvegicus (Rat).